The chain runs to 100 residues: Small ribosomal subunit protein uS14c (100 aa).

Belongs to the universal ribosomal protein uS14 family. In terms of assembly, part of the 30S ribosomal subunit.

It localises to the plastid. Its subcellular location is the chloroplast. Binds 16S rRNA, required for the assembly of 30S particles. This is Small ribosomal subunit protein uS14c from Lotus japonicus (Lotus corniculatus var. japonicus).